The primary structure comprises 306 residues: N-acetylmuramic acid 6-phosphate etherase (306 aa).

Positions 62 to 225 (IAQAFQNGGR…TTASMIRIGK (164 aa)) constitute an SIS domain. The active-site Proton donor is E90. E121 is an active-site residue.

The protein belongs to the GCKR-like family. MurNAc-6-P etherase subfamily. As to quaternary structure, homodimer.

It carries out the reaction N-acetyl-D-muramate 6-phosphate + H2O = N-acetyl-D-glucosamine 6-phosphate + (R)-lactate. It functions in the pathway amino-sugar metabolism; 1,6-anhydro-N-acetylmuramate degradation. Its pathway is amino-sugar metabolism; N-acetylmuramate degradation. It participates in cell wall biogenesis; peptidoglycan recycling. Functionally, specifically catalyzes the cleavage of the D-lactyl ether substituent of MurNAc 6-phosphate, producing GlcNAc 6-phosphate and D-lactate. Together with AnmK, is also required for the utilization of anhydro-N-acetylmuramic acid (anhMurNAc) either imported from the medium or derived from its own cell wall murein, and thus plays a role in cell wall recycling. The sequence is that of N-acetylmuramic acid 6-phosphate etherase from Vibrio atlanticus (strain LGP32) (Vibrio splendidus (strain Mel32)).